The sequence spans 72 residues: Translation initiation factor IF-1 (72 aa).

In terms of domain architecture, S1-like spans M1 to K72.

Belongs to the IF-1 family. As to quaternary structure, component of the 30S ribosomal translation pre-initiation complex which assembles on the 30S ribosome in the order IF-2 and IF-3, IF-1 and N-formylmethionyl-tRNA(fMet); mRNA recruitment can occur at any time during PIC assembly.

Its subcellular location is the cytoplasm. One of the essential components for the initiation of protein synthesis. Stabilizes the binding of IF-2 and IF-3 on the 30S subunit to which N-formylmethionyl-tRNA(fMet) subsequently binds. Helps modulate mRNA selection, yielding the 30S pre-initiation complex (PIC). Upon addition of the 50S ribosomal subunit IF-1, IF-2 and IF-3 are released leaving the mature 70S translation initiation complex. This Nitrosomonas eutropha (strain DSM 101675 / C91 / Nm57) protein is Translation initiation factor IF-1.